The chain runs to 428 residues: Aerobic C4-dicarboxylate transport protein (428 aa).

Transmembrane regions (helical) follow at residues Leu5 to Tyr27, Met47 to Met64, Ala77 to Val99, Val141 to Ala163, Val184 to Phe206, Leu219 to Ile241, Ile326 to Gly348, and Ile352 to Gly374.

Belongs to the dicarboxylate/amino acid:cation symporter (DAACS) (TC 2.A.23) family.

It localises to the cell inner membrane. Functionally, responsible for the aerobic transport of the dicarboxylates fumarate and malate and to a lesser extent succinate, from the periplasm across the inner membrane. This chain is Aerobic C4-dicarboxylate transport protein, found in Escherichia coli O157:H7.